The primary structure comprises 123 residues: MNLRIAMAIALGGAFGAVARFYISGLLPVYRDFPVGTLMVNSIASLILGYLYGLLFWGFDVPPDWRAFFGTGFCGALSTFSTFSYETFSLLREREYLIATLNILANVIITIALVFAGFMLARR.

Helical transmembrane passes span Met-7 to Leu-27, Met-39 to Phe-59, Phe-68 to Phe-88, and Leu-101 to Ala-121. Residues Gly-75 and Ser-78 each contribute to the Na(+) site.

The protein belongs to the fluoride channel Fluc/FEX (TC 1.A.43) family.

The protein localises to the cell membrane. The enzyme catalyses fluoride(in) = fluoride(out). Na(+) is not transported, but it plays an essential structural role and its presence is essential for fluoride channel function. Functionally, fluoride-specific ion channel. Important for reducing fluoride concentration in the cell, thus reducing its toxicity. In Thermococcus kodakarensis (strain ATCC BAA-918 / JCM 12380 / KOD1) (Pyrococcus kodakaraensis (strain KOD1)), this protein is Fluoride-specific ion channel FluC.